The primary structure comprises 380 residues: Cobalt-precorrin-5B C(1)-methyltransferase (380 aa).

It belongs to the CbiD family.

It catalyses the reaction Co-precorrin-5B + S-adenosyl-L-methionine = Co-precorrin-6A + S-adenosyl-L-homocysteine. The protein operates within cofactor biosynthesis; adenosylcobalamin biosynthesis; cob(II)yrinate a,c-diamide from sirohydrochlorin (anaerobic route): step 6/10. Catalyzes the methylation of C-1 in cobalt-precorrin-5B to form cobalt-precorrin-6A. The protein is Cobalt-precorrin-5B C(1)-methyltransferase of Salinispora arenicola (strain CNS-205).